An 832-amino-acid chain; its full sequence is Prickle-like protein 1-B (832 aa).

The PET domain maps to 14 to 122 (FGCQRSSTSD…NIKMLSRAVM (109 aa)). LIM zinc-binding domains lie at 124 to 188 (AMCE…ELLK), 189 to 249 (PRCS…HYAE), and 250 to 313 (YCES…EDVH). Disordered regions lie at residues 312–346 (VHAS…ADQC), 428–455 (QQPS…QRNN), 602–701 (ICQE…KERN), and 766–832 (CSSS…CIIS). Basic and acidic residues-rich tracts occupy residues 432–453 (EDNR…DLQR) and 603–614 (CQEKPPPEEKPM). Basic residues-rich tracts occupy residues 669–680 (RPHHHRRRKSRK) and 816–832 (TKSK…CIIS). A Cysteine methyl ester modification is found at Cys829. Cys829 carries S-farnesyl cysteine lipidation. Positions 830 to 832 (IIS) are cleaved as a propeptide — removed in mature form.

Belongs to the prickle / espinas / testin family. Interacts with dvl2/dsh and mapk8/jnk1. As to expression, expressed in the dorsal marginal zone of early gastrulae (stage 10). As gastrulation proceeds, expression expands to include the lateral and ventral marginal zones, excluding the few rows of cells above the blastopore lip. Expression moves dorsally with gastrulation cell movements, and by the end of gastrulation expression is seen in dorsal mesoderm and posterior but not anterior neural ectoderm. Expression becomes down-regulated in mesoderm but remains strong in posterior ectoderm through the neurula stages. During tailbud stages, expressed in the pronephric duct, tailbud, tailtip and forming somites. In the most posterior regions, expressed in notochord and in the floorplate of the neural tube with weak expression in the roofplate. At stage 30, expressed in a complex pattern in the head including strong expression in the lens and otic vesicle.

It localises to the cell membrane. Its function is as follows. Acts in a planar cell polarity (PCP) complex; polarization along the apical/basal axis of epithelial cells. Regulates the polarized assembly of fibronectrin on the surface of the mesoderm during gastrulation. Essential for gastrulation cell movements, cooperating with dvl2/dsh to activate jnk. Acts together with tes to control axial elongation. The polypeptide is Prickle-like protein 1-B (prickle1-b) (Xenopus laevis (African clawed frog)).